A 235-amino-acid chain; its full sequence is Large ribosomal subunit protein uL1 (235 aa).

This sequence belongs to the universal ribosomal protein uL1 family. In terms of assembly, part of the 50S ribosomal subunit.

In terms of biological role, binds directly to 23S rRNA. The L1 stalk is quite mobile in the ribosome, and is involved in E site tRNA release. Functionally, protein L1 is also a translational repressor protein, it controls the translation of the L11 operon by binding to its mRNA. This chain is Large ribosomal subunit protein uL1, found in Prochlorococcus marinus subsp. pastoris (strain CCMP1986 / NIES-2087 / MED4).